A 343-amino-acid polypeptide reads, in one-letter code: Phospholipid phosphatase-related protein type 2 (343 aa).

The next 3 helical transmembrane spans lie at 12-32 (FSII…VILL), 69-89 (VPPA…ILLG), and 129-149 (FLGV…AGQV). Asparagine 165 carries N-linked (GlcNAc...) asparagine glycosylation. 3 consecutive transmembrane segments (helical) span residues 210–230 (AALC…VFRV), 239–259 (SLCL…VAEY), and 266–286 (VLAG…CVVH). Positions 290 to 343 (SRPPSGRRLSPWEDLGQAPTMDSPLEKNPRSAGRIRHRHGSPHPSRRTAPAVAT) are disordered. Residues serine 299 and serine 312 each carry the phosphoserine modification. Over residues 322-335 (GRIRHRHGSPHPSR) the composition is skewed to basic residues.

Belongs to the PA-phosphatase related phosphoesterase family.

The protein resides in the membrane. This is Phospholipid phosphatase-related protein type 2 from Homo sapiens (Human).